The following is a 363-amino-acid chain: AA9 family lytic polysaccharide monooxygenase I (363 aa).

An N-terminal signal peptide occupies residues 1–19 (MSLFKFAAFVLGTAGSVAG). Histidine 20 and histidine 105 together coordinate Cu(2+). Intrachain disulfides connect cysteine 75/cysteine 197 and cysteine 116/cysteine 120. The O2 site is built by histidine 183 and glutamine 192. Tyrosine 194 provides a ligand contact to Cu(2+). A compositionally biased stretch (polar residues) spans 248-257 (GSDSNTATSG). Disordered stretches follow at residues 248-270 (GSDS…PTTT) and 298-363 (SVSY…RTQS). Positions 258–270 (ASPPSTNFSPTTT) are enriched in low complexity. Positions 298 to 307 (SVSYSQTPWP) are enriched in polar residues. The span at 308 to 329 (SSTATEATSASSSAGGSNNGHT) shows a compositional bias: low complexity. Residues 342 to 354 (TGKKRSRLNRRRM) show a composition bias toward basic residues.

This sequence belongs to the polysaccharide monooxygenase AA9 family. It depends on Cu(2+) as a cofactor.

It localises to the secreted. It catalyses the reaction [(1-&gt;4)-beta-D-glucosyl]n+m + reduced acceptor + O2 = 4-dehydro-beta-D-glucosyl-[(1-&gt;4)-beta-D-glucosyl]n-1 + [(1-&gt;4)-beta-D-glucosyl]m + acceptor + H2O.. Its function is as follows. Lytic polysaccharide monooxygenase (LPMO) that depolymerizes crystalline and amorphous polysaccharides via the oxidation of scissile alpha- or beta-(1-4)-glycosidic bonds, yielding C1 or C4 oxidation products. Catalysis by LPMOs requires the reduction of the active-site copper from Cu(II) to Cu(I) by a reducing agent and H(2)O(2) or O(2) as a cosubstrate. The chain is AA9 family lytic polysaccharide monooxygenase I from Emericella nidulans (strain FGSC A4 / ATCC 38163 / CBS 112.46 / NRRL 194 / M139) (Aspergillus nidulans).